A 186-amino-acid chain; its full sequence is ADP-ribosylation factor-like protein 6 (186 aa).

A lipid anchor (N-myristoyl glycine) is attached at G2. Residues 24–31 (GLDNSGKT), T50, 69–73 (DMSGQ), G72, 130–133 (NKMD), and A164 contribute to the GTP site. Residue T50 coordinates Mg(2+).

This sequence belongs to the small GTPase superfamily. Arf family. Interacts with SEC61B, ARL6IP1, ARL6IP2, ARL6IP3, ARL6IP4 ARL6IP5 and ARL6IP6. Interacts (GTP-bound form) with the BBSome a complex that contains BBS1, BBS2, BBS4, BBS5, BBS7, BBS8/TTC8, BBS9 and BBIP10. Interacts (GTP-free form) with IFT27.

Its subcellular location is the cell projection. It localises to the cilium membrane. The protein localises to the cytoplasm. The protein resides in the cytoskeleton. It is found in the cilium axoneme. Its subcellular location is the cilium basal body. In terms of biological role, involved in membrane protein trafficking at the base of the ciliary organelle. Mediates recruitment onto plasma membrane of the BBSome complex which would constitute a coat complex required for sorting of specific membrane proteins to the primary cilia. Together with the BBSome complex and LTZL1, controls SMO ciliary trafficking and contributes to the sonic hedgehog (SHH) pathway regulation. May regulate cilia assembly and disassembly and subsequent ciliary signaling events such as the Wnt signaling cascade. Isoform 2 may be required for proper retinal function and organization. The polypeptide is ADP-ribosylation factor-like protein 6 (ARL6) (Pongo abelii (Sumatran orangutan)).